The following is a 64-amino-acid chain: Large ribosomal subunit protein bL35 (64 aa).

It belongs to the bacterial ribosomal protein bL35 family.

The sequence is that of Large ribosomal subunit protein bL35 from Colwellia psychrerythraea (strain 34H / ATCC BAA-681) (Vibrio psychroerythus).